The sequence spans 118 residues: Basic phospholipase A2 PA-15 (118 aa).

Disulfide bonds link cysteine 11-cysteine 71, cysteine 27-cysteine 117, cysteine 29-cysteine 45, cysteine 44-cysteine 98, cysteine 51-cysteine 91, cysteine 60-cysteine 84, and cysteine 78-cysteine 89. Ca(2+)-binding residues include tyrosine 28, glycine 30, and glycine 32. Histidine 48 is an active-site residue. Ca(2+) is bound at residue aspartate 49. Aspartate 92 is an active-site residue.

It belongs to the phospholipase A2 family. Group I subfamily. D49 sub-subfamily. Ca(2+) serves as cofactor. In terms of tissue distribution, expressed by the venom gland.

Its subcellular location is the secreted. It carries out the reaction a 1,2-diacyl-sn-glycero-3-phosphocholine + H2O = a 1-acyl-sn-glycero-3-phosphocholine + a fatty acid + H(+). In terms of biological role, PLA2 catalyzes the calcium-dependent hydrolysis of the 2-acyl groups in 3-sn-phosphoglycerides. The polypeptide is Basic phospholipase A2 PA-15 (Pseudechis australis (Mulga snake)).